Consider the following 208-residue polypeptide: Small ribosomal subunit protein uS4 (208 aa).

The S4 RNA-binding domain maps to 98–166; the sequence is SRLDNVVYRM…VKEAIEASRN (69 aa).

It belongs to the universal ribosomal protein uS4 family. Part of the 30S ribosomal subunit. Contacts protein S5. The interaction surface between S4 and S5 is involved in control of translational fidelity.

Its function is as follows. One of the primary rRNA binding proteins, it binds directly to 16S rRNA where it nucleates assembly of the body of the 30S subunit. In terms of biological role, with S5 and S12 plays an important role in translational accuracy. This is Small ribosomal subunit protein uS4 from Kosmotoga olearia (strain ATCC BAA-1733 / DSM 21960 / TBF 19.5.1).